We begin with the raw amino-acid sequence, 218 residues long: Large ribosomal subunit protein bL25 (218 aa).

The interval 178 to 218 (VTPPTVTEDPDATEEDNTTAESVEATGERNDDNLDRPGRVE) is disordered. Acidic residues predominate over residues 185–195 (EDPDATEEDNT). The span at 203-218 (TGERNDDNLDRPGRVE) shows a compositional bias: basic and acidic residues.

Belongs to the bacterial ribosomal protein bL25 family. CTC subfamily. Part of the 50S ribosomal subunit; part of the 5S rRNA/L5/L18/L25 subcomplex. Contacts the 5S rRNA. Binds to the 5S rRNA independently of L5 and L18.

Functionally, this is one of the proteins that binds to the 5S RNA in the ribosome where it forms part of the central protuberance. This is Large ribosomal subunit protein bL25 from Shouchella clausii (strain KSM-K16) (Alkalihalobacillus clausii).